We begin with the raw amino-acid sequence, 54 residues long: Ovomucoid (54 aa).

Positions 4-54 (VDCSDYPKPVCSLEDMPLCGSDSKTYSNKCNFCNAVVDSNGTLTLSHFGKC) constitute a Kazal-like domain. 3 disulfides stabilise this stretch: C6–C36, C14–C33, and C22–C54. N43 carries an N-linked (GlcNAc...) asparagine glycan.

The protein localises to the secreted. The sequence is that of Ovomucoid from Vultur gryphus (Andean condor).